The primary structure comprises 468 residues: Maltose fermentation regulatory protein MAL33 (468 aa).

The segment at residues 8–34 (CDYCRVRRVKCDGKKPCSRCIEHNFDC) is a DNA-binding region (zn(2)-C6 fungal-type). Residues 41 to 49 (KKRGSKPIG) carry the Nuclear localization signal motif.

This sequence belongs to the MAL13 family.

It is found in the nucleus. Its function is as follows. Regulates the coordinate transcription of structural MAL3S (maltase) and MAL3T (maltose permease) genes. The sequence is that of Maltose fermentation regulatory protein MAL33 (MAL33) from Saccharomyces cerevisiae (strain ATCC 204508 / S288c) (Baker's yeast).